We begin with the raw amino-acid sequence, 232 residues long: Small ribosomal subunit protein uS5 (232 aa).

The tract at residues 1-47 (MAAEVTETAQPVETAASTDNNREQREPRRGGRERNPNRDRGNRDADK) is disordered. The span at 7–19 (ETAQPVETAASTD) shows a compositional bias: polar residues. The segment covering 20 to 47 (NNREQREPRRGGRERNPNRDRGNRDADK) has biased composition (basic and acidic residues). The 64-residue stretch at 50–113 (FLERVVTINR…EEAKKNFFRV (64 aa)) folds into the S5 DRBM domain.

It belongs to the universal ribosomal protein uS5 family. In terms of assembly, part of the 30S ribosomal subunit. Contacts proteins S4 and S8.

Functionally, with S4 and S12 plays an important role in translational accuracy. Its function is as follows. Located at the back of the 30S subunit body where it stabilizes the conformation of the head with respect to the body. The sequence is that of Small ribosomal subunit protein uS5 from Leifsonia xyli subsp. xyli (strain CTCB07).